The primary structure comprises 396 residues: Formate-dependent phosphoribosylglycinamide formyltransferase (396 aa).

N(1)-(5-phospho-beta-D-ribosyl)glycinamide-binding positions include 25–26 (EL) and Glu-85. ATP is bound by residues Arg-117, Lys-158, 163–168 (SSGKGQ), 198–201 (EAFI), and Glu-206. An ATP-grasp domain is found at 122-311 (RLAAETLAIP…EFALHVRAIL (190 aa)). Glu-270 and Glu-282 together coordinate Mg(2+). Residues Asp-289, Lys-359, and 366 to 367 (RR) each bind N(1)-(5-phospho-beta-D-ribosyl)glycinamide.

Belongs to the PurK/PurT family. In terms of assembly, homodimer.

The enzyme catalyses N(1)-(5-phospho-beta-D-ribosyl)glycinamide + formate + ATP = N(2)-formyl-N(1)-(5-phospho-beta-D-ribosyl)glycinamide + ADP + phosphate + H(+). The protein operates within purine metabolism; IMP biosynthesis via de novo pathway; N(2)-formyl-N(1)-(5-phospho-D-ribosyl)glycinamide from N(1)-(5-phospho-D-ribosyl)glycinamide (formate route): step 1/1. Functionally, involved in the de novo purine biosynthesis. Catalyzes the transfer of formate to 5-phospho-ribosyl-glycinamide (GAR), producing 5-phospho-ribosyl-N-formylglycinamide (FGAR). Formate is provided by PurU via hydrolysis of 10-formyl-tetrahydrofolate. This Shewanella frigidimarina (strain NCIMB 400) protein is Formate-dependent phosphoribosylglycinamide formyltransferase.